Consider the following 198-residue polypeptide: Probable GTP-binding protein EngB (198 aa).

The EngB-type G domain maps to 22–196 (NLSEIAFVGR…WNWIKGQAEL (175 aa)). GTP contacts are provided by residues 30–37 (GRSNVGKS), 57–61 (GKTQT), 75–78 (DVPG), 142–145 (TKAD), and 175–177 (FSA). Mg(2+) contacts are provided by S37 and T59.

It belongs to the TRAFAC class TrmE-Era-EngA-EngB-Septin-like GTPase superfamily. EngB GTPase family. The cofactor is Mg(2+).

Necessary for normal cell division and for the maintenance of normal septation. This Oenococcus oeni (strain ATCC BAA-331 / PSU-1) protein is Probable GTP-binding protein EngB.